The following is a 265-amino-acid chain: Pyridoxine 5'-phosphate synthase (265 aa).

N6 lines the 3-amino-2-oxopropyl phosphate pocket. 8 to 9 (DH) is a binding site for 1-deoxy-D-xylulose 5-phosphate. R17 lines the 3-amino-2-oxopropyl phosphate pocket. The Proton acceptor role is filled by H42. 1-deoxy-D-xylulose 5-phosphate contacts are provided by R44 and H49. E69 (proton acceptor) is an active-site residue. T99 serves as a coordination point for 1-deoxy-D-xylulose 5-phosphate. The active-site Proton donor is the H213. 3-amino-2-oxopropyl phosphate contacts are provided by residues G214 and 235–236 (GQ).

It belongs to the PNP synthase family. As to quaternary structure, homooctamer; tetramer of dimers.

The protein localises to the cytoplasm. It catalyses the reaction 3-amino-2-oxopropyl phosphate + 1-deoxy-D-xylulose 5-phosphate = pyridoxine 5'-phosphate + phosphate + 2 H2O + H(+). The protein operates within cofactor biosynthesis; pyridoxine 5'-phosphate biosynthesis; pyridoxine 5'-phosphate from D-erythrose 4-phosphate: step 5/5. Its function is as follows. Catalyzes the complicated ring closure reaction between the two acyclic compounds 1-deoxy-D-xylulose-5-phosphate (DXP) and 3-amino-2-oxopropyl phosphate (1-amino-acetone-3-phosphate or AAP) to form pyridoxine 5'-phosphate (PNP) and inorganic phosphate. The chain is Pyridoxine 5'-phosphate synthase from Nitratiruptor sp. (strain SB155-2).